A 197-amino-acid polypeptide reads, in one-letter code: Large ribosomal subunit protein uL11 (197 aa).

This sequence belongs to the universal ribosomal protein uL11 family. In terms of assembly, part of the ribosomal stalk of the 50S ribosomal subunit. Interacts with L10 and the large rRNA to form the base of the stalk. L10 forms an elongated spine to which L12 dimers bind in a sequential fashion forming a multimeric L10(L12)X complex. One or more lysine residues are methylated.

Its function is as follows. Forms part of the ribosomal stalk which helps the ribosome interact with GTP-bound translation factors. In Mycoplasma mobile (strain ATCC 43663 / 163K / NCTC 11711) (Mesomycoplasma mobile), this protein is Large ribosomal subunit protein uL11.